A 183-amino-acid chain; its full sequence is Probable RNA 2'-phosphotransferase (183 aa).

It belongs to the KptA/TPT1 family.

Its function is as follows. Removes the 2'-phosphate from RNA via an intermediate in which the phosphate is ADP-ribosylated by NAD followed by a presumed transesterification to release the RNA and generate ADP-ribose 1''-2''-cyclic phosphate (APPR&gt;P). May function as an ADP-ribosylase. This Clostridium perfringens (strain 13 / Type A) protein is Probable RNA 2'-phosphotransferase.